A 90-amino-acid polypeptide reads, in one-letter code: MNEVSIRTLNQETSKVLARVKRGEEINLTERGKVIARIIPASAGPLDSLISTGSVQPARVHGPAPRPTIPMRGGLDSGTLLERMRAEERY.

A disordered region spans residues 53–90; sequence GSVQPARVHGPAPRPTIPMRGGLDSGTLLERMRAEERY.

It belongs to the phD/YefM antitoxin family.

Its function is as follows. Antitoxin component of a type II toxin-antitoxin (TA) system. Neutralizes the effect of cognate toxin VapC35. The chain is Antitoxin VapB35 (vapB35) from Mycobacterium tuberculosis (strain CDC 1551 / Oshkosh).